A 270-amino-acid polypeptide reads, in one-letter code: Protein N-terminal and lysine N-methyltransferase EFM7 (270 aa).

A disordered region spans residues 1–45 (MSDIESLNGGDLFAEPSDFYKPPPEPHFATYTRDDVPESSTSQQK). S-adenosyl-L-methionine contacts are provided by residues Trp63, 89–91 (GAA), Asp111, Trp158, and Ser182.

Belongs to the class I-like SAM-binding methyltransferase superfamily. EFM7 family.

The protein resides in the cytoplasm. Functionally, S-adenosyl-L-methionine-dependent protein methyltransferase that trimethylates the N-terminal glycine 'Gly-2' of elongation factor 1-alpha, before also catalyzing the mono- and dimethylation of 'Lys-3'. This Kluyveromyces lactis (strain ATCC 8585 / CBS 2359 / DSM 70799 / NBRC 1267 / NRRL Y-1140 / WM37) (Yeast) protein is Protein N-terminal and lysine N-methyltransferase EFM7.